A 199-amino-acid polypeptide reads, in one-letter code: uncharacterized protein (199 aa).

Positions 71 to 104 (RANATNKLTVIAEQIQHLQEQARKVLEDARRDAD) form a coiled coil.

This is an uncharacterized protein from Mus musculus (Mouse).